Reading from the N-terminus, the 465-residue chain is Protein Loquacious (465 aa).

The tract at residues 1–337 (MDQENFHGSS…DSICGELEGE (337 aa)) is necessary for enhancing pre-miRNA processing by Dcr-1. A not required for interaction with Dcr-1 region spans residues 1–379 (MDQENFHGSS…TLKNATGKKL (379 aa)). Positions 1–392 (MDQENFHGSS…QKTCLKNNKI (392 aa)) are important for homodimerization and interaction with Dcr-1. Residues 129 to 211 (NGLAMKTPVS…DKLIGAQLPE (83 aa)) are sufficient for binding RNA. The segment at 129–322 (NGLAMKTPVS…WMRLQETPID (194 aa)) is necessary for promoting preferential binding of Dcr-2 to the less stably base paired ends of siRNAs. The DRBM 1 domain maps to 135–206 (TPVSILQELL…ARALIDKLIG (72 aa)). Positions 209–249 (LPESPSSSAGPSVTGLTVAGSGGDGNANATGGGDASDKTVG) are enables simultaneous binding of both DRBM 1 and 2 domains to dsRNA. A disordered region spans residues 210-246 (PESPSSSAGPSVTGLTVAGSGGDGNANATGGGDASDK). A compositionally biased stretch (polar residues) spans 211-223 (ESPSSSAGPSVTG). A necessary and sufficient for enhancing processing of pre-miRNAs by Dcr-1 region spans residues 220-465 (SVTGLTVAGS…LEYLKIMTKK (246 aa)). Over residues 228 to 242 (GSGGDGNANATGGGD) the composition is skewed to gly residues. Residues 245 to 322 (DKTVGNPIGW…WMRLQETPID (78 aa)) are sufficient for binding RNA. The 69-residue stretch at 250 to 318 (NPIGWLQEMC…AHRMWMRLQE (69 aa)) folds into the DRBM 2 domain. Residues 308-309 (AA) are necessary for binding pre-miRNA. A required for binding to Dcr-2 and to fully enhance Dcr-2 mediated cleavage of 3' overhanging termini (3'ovr) and blunt termini (BLT) dsRNAs. However, this region is dispensable for binding the dsRNA substrates region spans residues 338–359 (PRSSENYYGELKDISVPTLTTQ). The segment at 340-465 (SSENYYGELK…LEYLKIMTKK (126 aa)) is necessary for interaction with Dcr-1. A sufficent for binding to Dcr-1 region spans residues 392 to 463 (IDYIKLLGEI…NALEYLKIMT (72 aa)). The region spanning 393–461 (DYIKLLGEIA…AQNALEYLKI (69 aa)) is the DRBM 3 domain.

In terms of assembly, homodimer. As to quaternary structure, interacts with dicer enzyme Dcr-1. Component of the miRNA-directed RNA-induced loading complex (miRLC), composed of at least Dcr-1, AGO1 and loqs isoform PB (loqs-PB), which processes pre-miRNAs and loads the resulting miRNAs into the Argonaute 1 (AGO1)-containing RNA-induced silencing complex (miRISC) to target the selective destruction of homologous RNAs. Interacts (via DRBM 3 domain) with dicer enzyme Dcr-1 (via helicase domain). Different regions of the Dcr-1-loqs-PB heterodimer collaborate to recognize, bind and position the pre-miRNA for Dcr-1 mediated cleavage. In the absence of miRNA substrates, the heterodimer favors a closed, catalytically incompetent, conformation, whereas binding of authentic pre-miRNA substrates stabilizes the relatively rare open, catalytically competent, conformation of the heterodimer. During substrate recognition, the Dcr-1 PAZ domain and pre-miRNA interact with the DRBM 1 domain of loqs-PB, which likely contributes to substrate recognition and stabilization. At the miRNA binding stage, the Dcr-1 DRBM domain and the loqs-PB DRBM domains then bind the pre-miRNA in tandem to form a tight 'belt' around the pre-miRNA stem, the pre-miRNA loop is docked in the loop-binding region formed by DUF283, DRBM and part of the helicase domain of Dcr-1, and the loqs-PB DRBM 1 and the wing domain of Dcr-1 act together to bind the 5' and 3' pre-miRNA termini within the PAZ and platform domains of Dcr-1. These interactions between the proteins and their pre-miRNA substrate stabilize a distorted form of the pre-miRNA and position the scissile phosphodiester bonds of the pre-miRNA at the RNase III catalytic cleavage sites of Dcr-1. Following Dcr-1 mediated cleavage, the miRNA duplex remains bound to loqs-PB DRBM 1, which dissociates from the Dcr-1 RNase III 1 domain but remains in contact with the PAZ and wing domains suggesting that the heterodimer presents the mature miRNA to AGO2 for loading into the RNA-induced silencing complex (miRISC). In terms of assembly, able to interact with dicer enzyme Dcr-1. However, the relevance of such an interaction is unclear in vivo and another report found that it did not interact with Dcr-1. As to quaternary structure, monomer. Interacts (via C-terminus) with dicer enzyme Dcr-2 (via N-terminus); interaction is required for RNAi activity in producing siRNAs from a subset of endo- and exo-dsRNAs, and in the alternative siRLC, the interaction enhances the binding preference of the protein for the thermodynamically more stable ends of endogenous siRNAs. Interaction with Dcr-2 is RNA independent, however the isoform must bind both dsRNA and Dcr-2 to enhance Dcr-2 cleavage activity. Does not interact with Dcr-1. As to expression, strong expression in males and females. Expression in ovaries is relatively weak. In terms of tissue distribution, strong expression in females and relatively weak expression in males. Strong expression in ovaries.

The protein localises to the cytoplasm. The protein resides in the cytosol. In terms of biological role, double-stranded RNA-binding protein which can function in gene silencing by acting with Dcr-1 to enhance its ATP-independent processing of a specific subset of precursor micro-RNAs (pre-miRNAs) to mature miRNAs. Some reports found it was able to enhance the efficiency of pre-miRNA processing by Dcr-1, and can shift the cleavage site of Dcr-1 altering the length of the mature miRNAs produced by Dcr-1 alone. However, in contrast to isoform PB, it is not necessary or sufficient for enhancing miRNA biogenesis, and is not required for development or female germline stem cell (GSC) maintenance. Another report also found that it decreases binding of Dcr-1 to the miRNA substrate let-7. Double-stranded RNA-binding protein which functions in gene silencing by acting with Dcr-1 to enhance its ATP-independent processing of a specific subset of precursor micro-RNAs (pre-miRNAs) to mature miRNAs. Function is essential for development and female germline stem cell (GSC) maintenance. Functions in miRNA-mediated gene silencing by enhancing the binding affinity and specific pre-miRNA processing activity of Dcr-1, and as part of the loqs-PB-Dcr-1 complex, is involved in substrate discrimination, correctly positioning the pre-miRNA in the Dcr-1 catalytic center for cleavage, and miRNA loading into the Argonaute 1 (Ago1)-containing RNA-induced silencing complex (miRISC). Increases the binding affinity of Dcr-1 to pre-miRNAs, thereby increasing dicing efficiency and broadening the range of substrates that can be processed by the dicer. It may also confer the substrate specificity of Dcr-1 towards pre-miRNAs, as in its absence Dcr-1 displays siRNA-generating activity towards long dsRNA substrates. It can also shift the cleavage site of Dcr-1 for a small number of pre-miRNAs, changing the length of the mature miRNAs produced by Dcr-1 alone. Increases the range of pre-miRNAs that can be processed by Dcr-1, by enhancing the dicing of suboptimal hairpin substrates including ones with mismatches at the dicing site. This function may also promote the generation of novel miRNA genes as it appears to have an important role in processing evolutionarily young miRNA genes, suggesting that it may also enhance dicing of substrates that have not acquired hairpin features required for efficient miRNA processing. As newly emerged miRNAs can have deleterious or beneficial effects on fitness, this function is likely part of a regulatory system that prevents excessive emergence of active miRNA genes and thus keeps them within an optimal range. Also forms a RISC loading complex (miRLC) with Dcr-1 to mediate Ago1-loading of mature miRNAs into the RNA-induced silencing complex (miRISC). In female ovaries, required for Dcr-1 to generate the twenty-three nucleotide isomiR variant of miR-307a which is able to repress its targets Gk2 and tara. Functionally, double-stranded RNA-binding protein which has an essential role in gene silencing (RNAi) by acting with Dcr-2 to enhance its ATP-dependent processing of a subset of endogenous (endo) and exogenous (exo) dsRNAs into short interfering RNAs (siRNAs). Functions in RNAi by increasing the initial binding affinity of Dcr-2 to certain dsRNA substrates, and in the absence of r2d2, may also function in siRNA loading into the Argonaute 2 (AGO2)-containing RNA-induced silencing complex (siRISC) and guide strand selection for target silencing by the siRISC. Promotes Dcr-2 cleavage of a subset of dsRNAs, including endo-dsRNAs derived from convergent transcription, inverted repeats and transposons. Also enables Dcr-2 to produce hairpin-derived endo-siRNAs in the presence of cellular inhibitory inorganic phosphate, likely by increasing the binding affinity of the enzyme to the hairpin dsRNAs allowing the dsRNA to displace phosphate bound to Dcr-2. According to many reports, the cleavage reaction mode of Dcr-2 changes according to the termini of the dsRNA substrate, with the enzyme displaying a preference for processing blunt termini (BLT), likely non-self dsRNAs, over dsRNAs with 2 nucleotides 3' overhanging (3'ovr) termini, which are typically the structure of endo-dsRNAs. According to many reports, interaction with Loqs-PD modifies the molecular recognition mechanisms of Dcr-2 towards sub-optimal 3'ovr dsRNA substrates and thus enables the dicer to cleave endo-dsRNA templates with diverse termini. However, according to another report, the mode of cleavage reaction is not affected by the presence or absence of loqs-PD. In the absence of r2d2, may also form an alternative RISC loading complex (siRLC) with Dcr-2 to mediate AGO2-loading of endo- and exo-siRNAs into the RNA-induced silencing complex (siRISC). Many reports suggest that loqs-PD and r2d2 function independently with dcr-2 in distinct siRNA pathways, and may even compete for binding to the enzyme. Loaded siRNAs serve as a guide to direct the siRISC to complementary RNAs to degrade them or prevent their translation. The siRLC plays an important role in the ATP-dependent asymmetry sensing of the duplex, and is therefore also responsible for the selection of the strand that ultimately acts as the guide siRNA for the siRISC. Thermodynamically asymmetric endo-siRNAs can be pre-oriented in the siRLC by the Loqs-PD and DCr-2 complex, which preferentially binds to the most thermodynamically stable strand prior to loading into the siRISC. Appears to be involved in promoting double-strand breaks (DSBs) following exposure to a low-dose/dose-rate (LDR) of ionizing radiation. This is Protein Loquacious from Drosophila melanogaster (Fruit fly).